A 306-amino-acid chain; its full sequence is MKGSIIGAGQVGMACAYAMLIQNTLDELVIHDIDRAKLEGEVMDLVHGIPFVEPTRIWAGELADCAGSDVVIVTAGAKQRPGETRLDLVHRNVEIFKSLIPALMEHCPSAIFLVVSNPVDVMTYVSLKLAGLPAGQVLGSGTVLDTARFRYLLAQRLGVDPRSLHAYIIGEHGDSEVAVWSKVNIAGTPIGQLSPEWDPAHLGDIFEQVRNAAYEIIRRKGATSYAIGLGVAQIVQALVRDQRRVLTVSSLTQGEYDLPEVCLSLPRVVGRQGVERTLAMSLTESERQQLHRSAHILRQVIDSIRW.

Residues Val11, Asp32, Lys37, and 76 to 77 each bind NAD(+); that span reads GA. Substrate contacts are provided by Gln79 and Arg85. Residues Ser98, 115–117, and Ser140 each bind NAD(+); that span reads VSN. Residue 117–120 participates in substrate binding; the sequence is NPVD. 145 to 148 provides a ligand contact to substrate; the sequence is DTAR. Residues Arg150 and His165 each contribute to the beta-D-fructose 1,6-bisphosphate site. The active-site Proton acceptor is His172. Tyr214 carries the phosphotyrosine modification. Thr223 contacts substrate.

The protein belongs to the LDH/MDH superfamily. LDH family. As to quaternary structure, homotetramer.

The protein resides in the cytoplasm. It catalyses the reaction (S)-lactate + NAD(+) = pyruvate + NADH + H(+). It participates in fermentation; pyruvate fermentation to lactate; (S)-lactate from pyruvate: step 1/1. Its activity is regulated as follows. Allosterically activated by fructose 1,6-bisphosphate (FBP). Its function is as follows. Catalyzes the conversion of lactate to pyruvate. The chain is L-lactate dehydrogenase from Synechococcus sp. (strain JA-3-3Ab) (Cyanobacteria bacterium Yellowstone A-Prime).